A 350-amino-acid chain; its full sequence is UDP-rhamnose/UDP-galactose transporter 3 (350 aa).

10 helical membrane-spanning segments follow: residues 12–32 (AVSD…IIMA), 41–61 (GFAF…TALV), 81–101 (LIWF…SLML), 104–124 (VGFY…MEWI), 133–153 (EVKI…VTDV), 160–180 (FICA…IGSL), 200–220 (AFSL…KFIM), 224–244 (MSSG…FCNI), 257–277 (SFQV…WLLF), and 286–306 (VAGM…MELE).

It belongs to the TPT transporter family. TPT (TC 2.A.7.9) subfamily.

The protein localises to the golgi apparatus membrane. In terms of biological role, nucleotide-sugar transporter that transports UDP-rhamnose or UDP-galactose and UMP in a strict counter-exchange mode. This chain is UDP-rhamnose/UDP-galactose transporter 3, found in Arabidopsis thaliana (Mouse-ear cress).